The chain runs to 596 residues: Arginine--tRNA ligase (596 aa).

Positions 128-138 match the 'HIGH' region motif; sequence ANPTSSLHVGH.

This sequence belongs to the class-I aminoacyl-tRNA synthetase family. In terms of assembly, monomer.

It localises to the cytoplasm. The catalysed reaction is tRNA(Arg) + L-arginine + ATP = L-arginyl-tRNA(Arg) + AMP + diphosphate. In Acinetobacter baumannii (strain AB307-0294), this protein is Arginine--tRNA ligase.